A 551-amino-acid polypeptide reads, in one-letter code: Meiotically up-regulated gene 184 protein (551 aa).

Residues 12–78 (DYYAILKLQK…TKRLIYDQLF (67 aa)) enclose the J domain. The span at 85–122 (RSQYKPNSTSNPSKHTSAYASYNKGKNSKWSSPFASTT) shows a compositional bias: polar residues. 3 disordered regions span residues 85–153 (RSQY…FPRD), 176–226 (RQEP…SVYK), and 334–359 (EAESSNPFSFDFGSSGPKSRSDTRNN). Basic and acidic residues predominate over residues 124-133 (KPQESSEKYS). The segment covering 134 to 146 (KKSSTRKKEHFNK) has biased composition (basic residues). 2 stretches are compositionally biased toward basic and acidic residues: residues 176–187 (RQEPESLKKENN) and 203–219 (GPKDSSKHPSNDGKIPE).

It is found in the cytoplasm. Its subcellular location is the cytoskeleton. Functionally, has a role in sporulation. The sequence is that of Meiotically up-regulated gene 184 protein (mug184) from Schizosaccharomyces pombe (strain 972 / ATCC 24843) (Fission yeast).